The sequence spans 38 residues: MSKSNPNKQSVELNRTSLYWGLLLIFVLAVLFSSYIFN.

The helical transmembrane segment at 17–37 (SLYWGLLLIFVLAVLFSSYIF) threads the bilayer.

It belongs to the PsbL family. As to quaternary structure, PSII is composed of 1 copy each of membrane proteins PsbA, PsbB, PsbC, PsbD, PsbE, PsbF, PsbH, PsbI, PsbJ, PsbK, PsbL, PsbM, PsbT, PsbY, PsbZ, Psb30/Ycf12, at least 3 peripheral proteins of the oxygen-evolving complex and a large number of cofactors. It forms dimeric complexes.

The protein resides in the plastid. Its subcellular location is the chloroplast thylakoid membrane. One of the components of the core complex of photosystem II (PSII). PSII is a light-driven water:plastoquinone oxidoreductase that uses light energy to abstract electrons from H(2)O, generating O(2) and a proton gradient subsequently used for ATP formation. It consists of a core antenna complex that captures photons, and an electron transfer chain that converts photonic excitation into a charge separation. This subunit is found at the monomer-monomer interface and is required for correct PSII assembly and/or dimerization. This is Photosystem II reaction center protein L from Bigelowiella natans (Pedinomonas minutissima).